The sequence spans 381 residues: Actin-binding Rho-activating protein (381 aa).

Disordered regions lie at residues E39–S156 and Q179–D207. Positions P69–P79 are enriched in polar residues. Basic and acidic residues predominate over residues K97–S110. S156 and S188 each carry phosphoserine. Residues Q179–S188 show a composition bias toward basic and acidic residues. Actin-binding stretches follow at residues E199–A299 and K300–K381. 2 interaction with actin regions span residues S240–G285 and M352–K381.

Binds F-actin and ABLIM1, ABLIM2 and ABLIM3. Interaction with ABLIM2 and ABLIM3 enhances activity.

The protein resides in the cytoplasm. It is found in the myofibril. It localises to the sarcomere. Its subcellular location is the cytoskeleton. Acts as an activator of serum response factor (SRF)-dependent transcription possibly by inducing nuclear translocation of MKL1 or MKL2 and through a mechanism requiring Rho-actin signaling. This is Actin-binding Rho-activating protein from Homo sapiens (Human).